We begin with the raw amino-acid sequence, 259 residues long: MTMPYYASAEQIMRDRSELARKGIARGRSVVVLTFRDGVLFVAENPSTALHKVSELYDRLGFAAVGKYNEFENLRRAGIVHADMRGYSYDRRDVTGRSLANAYAQTLGTIFTEQPKPYEVEICVAEVGRVGSPKAPQLYRITYDGSIVDEQHFVVMGGTTEPIATAMRESYRADLDLEAAVGIAVNALRQGGAGEGEKRNVDVASLEVAVLDQSRPRRAFRRIAGAALEQLVPAAPAAASESAPEPKPDTETKPADPQD.

The segment covering 233-243 (PAAPAAASESA) has biased composition (low complexity). The disordered stretch occupies residues 233–259 (PAAPAAASESAPEPKPDTETKPADPQD). A compositionally biased stretch (basic and acidic residues) spans 244–259 (PEPKPDTETKPADPQD).

It belongs to the peptidase T1A family. As to quaternary structure, the 20S proteasome core is composed of 14 alpha and 14 beta subunits that assemble into four stacked heptameric rings, resulting in a barrel-shaped structure. The two inner rings, each composed of seven catalytic beta subunits, are sandwiched by two outer rings, each composed of seven alpha subunits. The catalytic chamber with the active sites is on the inside of the barrel. Has a gated structure, the ends of the cylinder being occluded by the N-termini of the alpha-subunits. Is capped by the proteasome-associated ATPase, ARC.

Its subcellular location is the cytoplasm. Its pathway is protein degradation; proteasomal Pup-dependent pathway. With respect to regulation, the formation of the proteasomal ATPase ARC-20S proteasome complex, likely via the docking of the C-termini of ARC into the intersubunit pockets in the alpha-rings, may trigger opening of the gate for substrate entry. Interconversion between the open-gate and close-gate conformations leads to a dynamic regulation of the 20S proteasome proteolysis activity. Component of the proteasome core, a large protease complex with broad specificity involved in protein degradation. The chain is Proteasome subunit alpha from Rhodococcus opacus (strain B4).